A 244-amino-acid polypeptide reads, in one-letter code: 15,16-dihydrobiliverdin:ferredoxin oxidoreductase (244 aa).

Belongs to the HY2 family.

The catalysed reaction is 15,16-dihydrobiliverdin + oxidized 2[4Fe-4S]-[ferredoxin] = biliverdin IXalpha + reduced 2[4Fe-4S]-[ferredoxin] + 2 H(+). Its function is as follows. Catalyzes the two-electron reduction of biliverdin IX-alpha at the C15 methine bridge. The chain is 15,16-dihydrobiliverdin:ferredoxin oxidoreductase (pebA) from Nostoc punctiforme (strain ATCC 29133 / PCC 73102).